Here is a 246-residue protein sequence, read N- to C-terminus: Probable septum site-determining protein MinC (246 aa).

Residues 116 to 140 (AAVSPPPPPPARAEPAPPAARPAPG) form a disordered region. Residues 119–136 (SPPPPPPARAEPAPPAAR) are compositionally biased toward pro residues.

This sequence belongs to the MinC family. In terms of assembly, interacts with MinD and FtsZ.

In terms of biological role, cell division inhibitor that blocks the formation of polar Z ring septums. Rapidly oscillates between the poles of the cell to destabilize FtsZ filaments that have formed before they mature into polar Z rings. Prevents FtsZ polymerization. The chain is Probable septum site-determining protein MinC from Xanthomonas oryzae pv. oryzae (strain MAFF 311018).